A 288-amino-acid polypeptide reads, in one-letter code: Translocon-associated protein subunit alpha (288 aa).

Positions 1 to 28 (MFNFGSKILVLFLVAFPCGLISFGRVSA) are cleaved as a signal peptide. At 29 to 208 (DSESAEDIFP…ELEEGLDGET (180 aa)) the chain is on the lumenal side. A disordered region spans residues 34 to 69 (EDIFPDSTVDEEEEEEEDEVLVEEDQVPGSETEDDI). N-linked (GlcNAc...) asparagine glycans are attached at residues asparagine 137 and asparagine 192. A helical membrane pass occupies residues 209–229 (IFMYIFLTGLVVLAVFGMYQV). Topologically, residues 230 to 288 (LESRTRKRFPVKVETGTGGMNGVDISWIPQETLNIMSKASASPKASPRKRTKRAVGVDQ) are cytoplasmic. The segment at 267 to 288 (KASASPKASPRKRTKRAVGVDQ) is disordered.

It belongs to the TRAP-alpha family. In terms of assembly, heterotetramer of TRAP-alpha, TRAP-beta, TRAP-delta and TRAP-gamma. Phosphorylated in its cytoplasmic tail.

The protein resides in the endoplasmic reticulum membrane. In terms of biological role, TRAP proteins are part of a complex whose function is to bind calcium to the ER membrane and thereby regulate the retention of ER resident proteins. May be involved in the recycling of the translocation apparatus after completion of the translocation process or may function as a membrane-bound chaperone facilitating folding of translocated proteins. This is Translocon-associated protein subunit alpha (ssr1) from Oncorhynchus mykiss (Rainbow trout).